Here is a 757-residue protein sequence, read N- to C-terminus: RNA-directed RNA polymerase catalytic subunit (757 aa).

The interval 52 to 82 (KGKWTTNTETGAPQLNPIDGPLPEDNEPSGY) is disordered. A compositionally biased stretch (polar residues) spans 55-64 (WTTNTETGAP). 2 short sequence motifs (nuclear localization signal) span residues 187 to 195 (RKRRVRDNM) and 203 to 216 (RTIG…NKKS). The promoter-binding site stretch occupies residues 249–256 (RGFVYFVE). A RdRp catalytic domain is found at 286-483 (VRKMMTNSQD…GINMSKKKSY (198 aa)).

It belongs to the influenza viruses polymerase PB1 family. Influenza RNA polymerase is composed of three subunits: PB1, PB2 and PA. Interacts (via N-terminus) with PA (via C-terminus). Interacts (via C-terminus) with PB2 (via N-terminus); this interaction is essential for transcription initiation. In terms of processing, phosphorylated by host PRKCA.

It localises to the host nucleus. Its subcellular location is the host cytoplasm. The catalysed reaction is RNA(n) + a ribonucleoside 5'-triphosphate = RNA(n+1) + diphosphate. Its function is as follows. RNA-dependent RNA polymerase which is responsible for replication and transcription of virus RNA segments. The transcription of viral mRNAs occurs by a unique mechanism called cap-snatching. 5' methylated caps of cellular mRNAs are cleaved after 10-13 nucleotides by PA. In turn, these short capped RNAs are used as primers by PB1 for transcription of viral mRNAs. During virus replication, PB1 initiates RNA synthesis and copy vRNA into complementary RNA (cRNA) which in turn serves as a template for the production of more vRNAs. This chain is RNA-directed RNA polymerase catalytic subunit, found in Aves (Cat).